Reading from the N-terminus, the 386-residue chain is Ovalbumin (386 aa).

Glycine 2 bears the N-acetylglycine mark. Residue serine 69 is modified to Phosphoserine. Cysteine 74 and cysteine 121 form a disulfide bridge. Asparagine 293 carries an N-linked (GlcNAc...) asparagine glycan. Serine 345 carries the phosphoserine modification.

Belongs to the serpin family. Ov-serpin subfamily. In terms of processing, the N-terminus is blocked.

It is found in the secreted. Its function is as follows. Storage protein of egg white. Lacks protease inhibitory activity. The protein is Ovalbumin (SERPINB14) of Dromaius novaehollandiae (Emu).